The sequence spans 382 residues: O-antigen polymerase (382 aa).

Residues 1 to 3 are Cytoplasmic-facing; that stretch reads MNN. The helical transmembrane segment at 4–22 threads the bilayer; sequence INKIFITFLCIELIIGGGG. At 23–34 the chain is on the periplasmic side; it reads RLLEPLGIFPLR. A helical transmembrane segment spans residues 35–54; that stretch reads YLLFVFSFILLIFNLVTFNF. Over 55–62 the chain is Cytoplasmic; that stretch reads SITQKCVS. Residues 63–81 traverse the membrane as a helical segment; sequence LFIWLLLFPFYGFFVGLLA. The Periplasmic segment spans residues 82 to 94; that stretch reads GNKINDILFDVQP. The helical transmembrane segment at 95 to 112 threads the bilayer; the sequence is YLFMLSLIYLFTLRYTLK. Residues 113–125 are Cytoplasmic-facing; sequence VFSCEIFIKIVNA. A helical transmembrane segment spans residues 126–146; the sequence is FALYGSLLYISYIILLNFGLL. Topologically, residues 147-167 are periplasmic; that stretch reads NFNLIYEHLSLTSEFFFRPDG. The chain crosses the membrane as a helical span at residues 168-187; that stretch reads AFFSKSFYFFGVGAIISFVD. The Cytoplasmic segment spans residues 188 to 189; sequence KK. Residues 190-206 traverse the membrane as a helical segment; it reads YLKCLIIVLAILLTESR. Topologically, residues 207–208 are periplasmic; the sequence is GV. Residues 209-226 form a helical membrane-spanning segment; it reads LLFTTLSLLLASFKLHKL. Residues 227-229 are Cytoplasmic-facing; it reads YLN. A helical transmembrane segment spans residues 230–247; the sequence is TIIIILGSVLFIIMLYMV. Topologically, residues 248–300 are periplasmic; it reads GSRSEDSDSVRFNDLYFYYKNVDLATFLFGRGFGSFILDRLRIEIVPLEILQK. A helical transmembrane segment spans residues 301–318; the sequence is TGVIGVFISLVPMLLIFL. The Cytoplasmic portion of the chain corresponds to 319 to 329; sequence KGYFLNSTKTS. Residues 330–349 traverse the membrane as a helical segment; the sequence is LMMSLILFFSITVSITNPFL. At 350 to 352 the chain is on the periplasmic side; that stretch reads FTP. Residues 353–370 traverse the membrane as a helical segment; it reads MGIFIIGVVVLWVFSIEN. Topologically, residues 371 to 382 are cytoplasmic; it reads IQISNNLTSGAK.

The protein resides in the cell inner membrane. The catalysed reaction is n lipid-linked O-antigen repeat units = a lipid-linked O antigen + (n-1) polyisoprenyl diphosphate.. It functions in the pathway bacterial outer membrane biogenesis; LPS O-antigen biosynthesis. Its function is as follows. Polymerase involved in the biosynthesis of the lipopolysaccharide (LPS). Catalyzes the polymerization of the O-antigen repeat units on the periplasmic face of the inner membrane, leading to the formation of the lipid-linked O-antigen molecule. This is O-antigen polymerase from Shigella flexneri.